Reading from the N-terminus, the 446-residue chain is WEB family protein At3g56270 (446 aa).

Positions 313–349 form a coiled coil; it reads TNVSRIEILRKLEEANEEVKQSKQALEVALNRVEIAS.

Belongs to the WEB family.

This is WEB family protein At3g56270 from Arabidopsis thaliana (Mouse-ear cress).